The primary structure comprises 239 residues: MLKQTLLYTGKAKSVYETDNADHLILVFRDDASAFNGEKIEQLDRKGKVNNRFNAFIMEKLAEAGIETHFEKLLSPTEVLVKKLQMIPVECVIRNYAAGSLCRRLGVEEGKELTPPTFELFYKDDGLGDPMVNESQAIALGWATAEQLEQMKVLTYKVNDVLKALFAEGNMILVDFKLEFGVFHDRIVLGDEFSPDGCRLWDKDTKKKLDKDRFRQGLGGVVEAYEEVAARLGVDLSDI.

It belongs to the SAICAR synthetase family.

The enzyme catalyses 5-amino-1-(5-phospho-D-ribosyl)imidazole-4-carboxylate + L-aspartate + ATP = (2S)-2-[5-amino-1-(5-phospho-beta-D-ribosyl)imidazole-4-carboxamido]succinate + ADP + phosphate + 2 H(+). It participates in purine metabolism; IMP biosynthesis via de novo pathway; 5-amino-1-(5-phospho-D-ribosyl)imidazole-4-carboxamide from 5-amino-1-(5-phospho-D-ribosyl)imidazole-4-carboxylate: step 1/2. This Acinetobacter baumannii (strain AB307-0294) protein is Phosphoribosylaminoimidazole-succinocarboxamide synthase.